The sequence spans 197 residues: Holliday junction branch migration complex subunit RuvA (197 aa).

Residues 1–62 form a domain I region; sequence MIEFVRGEVA…EDQEVLFGFR (62 aa). Positions 63–141 are domain II; sequence SRRERALFTK…ELAPDYIPSE (79 aa). Positions 141–145 are flexible linker; that stretch reads EGLFA. A domain III region spans residues 146–197; the sequence is QGNAELNEACEALTALGYSEREVEKVKKALQGEVLSTDQYVKRALQLLLNVR.

The protein belongs to the RuvA family. As to quaternary structure, homotetramer. Forms an RuvA(8)-RuvB(12)-Holliday junction (HJ) complex. HJ DNA is sandwiched between 2 RuvA tetramers; dsDNA enters through RuvA and exits via RuvB. An RuvB hexamer assembles on each DNA strand where it exits the tetramer. Each RuvB hexamer is contacted by two RuvA subunits (via domain III) on 2 adjacent RuvB subunits; this complex drives branch migration. In the full resolvosome a probable DNA-RuvA(4)-RuvB(12)-RuvC(2) complex forms which resolves the HJ.

The protein localises to the cytoplasm. Its function is as follows. The RuvA-RuvB-RuvC complex processes Holliday junction (HJ) DNA during genetic recombination and DNA repair, while the RuvA-RuvB complex plays an important role in the rescue of blocked DNA replication forks via replication fork reversal (RFR). RuvA specifically binds to HJ cruciform DNA, conferring on it an open structure. The RuvB hexamer acts as an ATP-dependent pump, pulling dsDNA into and through the RuvAB complex. HJ branch migration allows RuvC to scan DNA until it finds its consensus sequence, where it cleaves and resolves the cruciform DNA. The chain is Holliday junction branch migration complex subunit RuvA from Exiguobacterium sibiricum (strain DSM 17290 / CCUG 55495 / CIP 109462 / JCM 13490 / 255-15).